Here is a 192-residue protein sequence, read N- to C-terminus: Peptidyl-tRNA hydrolase (192 aa).

His17 serves as a coordination point for tRNA. Residue His22 is the Proton acceptor of the active site. TRNA is bound by residues Phe68, Asn70, and Asn116.

The protein belongs to the PTH family. In terms of assembly, monomer.

It localises to the cytoplasm. It catalyses the reaction an N-acyl-L-alpha-aminoacyl-tRNA + H2O = an N-acyl-L-amino acid + a tRNA + H(+). In terms of biological role, hydrolyzes ribosome-free peptidyl-tRNAs (with 1 or more amino acids incorporated), which drop off the ribosome during protein synthesis, or as a result of ribosome stalling. Its function is as follows. Catalyzes the release of premature peptidyl moieties from peptidyl-tRNA molecules trapped in stalled 50S ribosomal subunits, and thus maintains levels of free tRNAs and 50S ribosomes. The sequence is that of Peptidyl-tRNA hydrolase from Stenotrophomonas maltophilia (strain K279a).